Consider the following 296-residue polypeptide: Enoyl-CoA hydratase AKT3-2 (296 aa).

Residues 294–296 (PKL) carry the Peroxisomal targeting signal type 1 motif.

This sequence belongs to the enoyl-CoA hydratase/isomerase family.

The protein localises to the peroxisome. It carries out the reaction a (3S)-3-hydroxyacyl-CoA = a (2E)-enoyl-CoA + H2O. The catalysed reaction is a 4-saturated-(3S)-3-hydroxyacyl-CoA = a (3E)-enoyl-CoA + H2O. The protein operates within mycotoxin biosynthesis. Enoyl-CoA hydratase; part of the gene clusters that mediate the biosynthesis of the host-selective toxins (HSTs) AK-toxins responsible for Japanese pear black spot disease by the Japanese pear pathotype. AK-toxins are esters of 9,10-epoxy 8-hydroxy 9-methyldecatrienoic acid (EDA). On cellular level, AK-toxins affect plasma membrane of susceptible cells and cause a sudden increase in loss of K(+) after a few minutes of toxin treatment. The acyl-CoA ligase AKT1, the hydrolase AKT2 and enoyl-CoA hydratase AKT3 are all involved in the biosynthesis of the AK-, AF- and ACT-toxin common 9,10-epoxy-8-hydroxy-9-methyl-decatrienoic acid (EDA) structural moiety. Part of the EDA biosynthesis occurs in the peroxisome since these 3 enzymes are localized in peroxisomes. The exact roles of the 3 enzymes, as well as of additional AK-toxin clusters enzymes, including AKT4, AKT6 and AKTS1, have still to be elucidated. The Cytochrome P450 monooxygenase AKT7 on the other side functions to limit production of EDA and AK-toxin, probably via the catalysis of a side reaction of EDA or its precursor. The polypeptide is Enoyl-CoA hydratase AKT3-2 (Alternaria alternata (Alternaria rot fungus)).